The sequence spans 271 residues: Tryptophan synthase alpha chain (271 aa).

Residues Glu-49 and Asp-60 each act as proton acceptor in the active site.

The protein belongs to the TrpA family. In terms of assembly, tetramer of two alpha and two beta chains.

The enzyme catalyses (1S,2R)-1-C-(indol-3-yl)glycerol 3-phosphate + L-serine = D-glyceraldehyde 3-phosphate + L-tryptophan + H2O. The protein operates within amino-acid biosynthesis; L-tryptophan biosynthesis; L-tryptophan from chorismate: step 5/5. Its function is as follows. The alpha subunit is responsible for the aldol cleavage of indoleglycerol phosphate to indole and glyceraldehyde 3-phosphate. This Leptothrix cholodnii (strain ATCC 51168 / LMG 8142 / SP-6) (Leptothrix discophora (strain SP-6)) protein is Tryptophan synthase alpha chain.